Reading from the N-terminus, the 212-residue chain is Probable GTP-binding protein EngB (212 aa).

Residues 25 to 199 enclose the EngB-type G domain; that stretch reads FGYEVAFAGR…WAKLDEWMEY (175 aa). GTP contacts are provided by residues 33–40, 60–64, 78–81, 145–148, and 178–180; these read GRSNAGKS, GRTQL, DLPG, TKSD, and FSS. Residues S40 and T62 each contribute to the Mg(2+) site.

Belongs to the TRAFAC class TrmE-Era-EngA-EngB-Septin-like GTPase superfamily. EngB GTPase family. The cofactor is Mg(2+).

Its function is as follows. Necessary for normal cell division and for the maintenance of normal septation. This chain is Probable GTP-binding protein EngB, found in Hydrogenovibrio crunogenus (strain DSM 25203 / XCL-2) (Thiomicrospira crunogena).